The primary structure comprises 364 residues: Thebaine 6-O-demethylase (364 aa).

The 101-residue stretch at 214–314 folds into the Fe2OG dioxygenase domain; the sequence is GTQAMRMNYY…RLSIATFHDP (101 aa). Y223 provides a ligand contact to 2-oxoglutarate. Fe cation is bound by residues H238, D240, and H295. 2-oxoglutarate contacts are provided by R305 and S307.

It belongs to the iron/ascorbate-dependent oxidoreductase family. It depends on L-ascorbate as a cofactor. The cofactor is Fe cation. As to expression, mainly expressed in stems and leaves and, to a lower extent, in capsules and roots.

The catalysed reaction is thebaine + 2-oxoglutarate + O2 = neopinone + formaldehyde + succinate + CO2. The enzyme catalyses oripavine + 2-oxoglutarate + O2 = neomorphinone + formaldehyde + succinate + CO2. It carries out the reaction (S)-canadine + S-adenosyl-L-methionine = (S)-cis-N-methylcanadine + S-adenosyl-L-homocysteine. It catalyses the reaction thebaine + 2-oxoglutarate + O2 = 6-O-demethylthebaine + formaldehyde + succinate + CO2 + H(+). The protein operates within alkaloid biosynthesis; morphine biosynthesis. Moderate substrate inhibition. Not inhibited in vitro by acylcyclohexanediones. Functionally, non-heme dioxygenase involved in biosynthesis of morphinan-type benzylisoquinoline and opiate alkaloids natural products. Mediates the conversion of thebaine to neopinone. Also catalyzes, with lower efficiency, the 6-O-demethylation of oripavine to neomorphinone, which is converted spontaneously to morphinone. Supports dealkylation reactions such as O,O-demethylenation in the metabolism of protopine, benzo[c]phenanthridine, and rhoeadine alkaloids; cleaves a methylenedioxy bridge leaving two hydroxyl groups. Catalyzes the O-demethylation of methylenedioxy bridges on protopine alkaloids such as allocryptopine. No activity with (S)-reticuline, salutaridine, papaverine, (S)-corytuberine, (S)-scoulerine, pavine, noscapine or codeine. The polypeptide is Thebaine 6-O-demethylase (Papaver somniferum (Opium poppy)).